The sequence spans 198 residues: MFLLRPPTPAQVAAFVARSREQAPSYAETGWSLDGRTPDWARSGRHRVRVGEGEACWERAKAALRGGQMFQDWVLRPHGEASTPLSRQGATVVLLVRHFGPWGRRKWGLYSLMTNRVLYLVDEPDRYGFGYGTLPGHLVRGEERFLLERDAGGAVWFDLTTFSRAALPFSRFAQPLVGAAQRRGARHYARMLVRAAGC.

It belongs to the UPF0548 family.

The polypeptide is UPF0548 protein DR_2035 (Deinococcus radiodurans (strain ATCC 13939 / DSM 20539 / JCM 16871 / CCUG 27074 / LMG 4051 / NBRC 15346 / NCIMB 9279 / VKM B-1422 / R1)).